Consider the following 254-residue polypeptide: Triosephosphate isomerase (254 aa).

12–14 is a substrate binding site; sequence NWK. The active-site Electrophile is the His-99. Catalysis depends on Glu-169, which acts as the Proton acceptor. Residues Gly-175, Ser-214, and 235-236 each bind substrate; that span reads GG.

It belongs to the triosephosphate isomerase family. As to quaternary structure, homodimer.

The protein resides in the cytoplasm. It carries out the reaction D-glyceraldehyde 3-phosphate = dihydroxyacetone phosphate. Its pathway is carbohydrate biosynthesis; gluconeogenesis. It functions in the pathway carbohydrate degradation; glycolysis; D-glyceraldehyde 3-phosphate from glycerone phosphate: step 1/1. In terms of biological role, involved in the gluconeogenesis. Catalyzes stereospecifically the conversion of dihydroxyacetone phosphate (DHAP) to D-glyceraldehyde-3-phosphate (G3P). This is Triosephosphate isomerase from Brucella melitensis biotype 1 (strain ATCC 23456 / CCUG 17765 / NCTC 10094 / 16M).